The sequence spans 206 residues: Protein MIS12 homolog (206 aa).

The stretch at 102–206 (DKCQETNPFS…EKESRRLETQ (105 aa)) forms a coiled coil.

Belongs to the mis12 family. Component of the MIS12 complex composed of MIS12, DSN1, NSL1 and PMF1. Also interacts with KNL1, CBX3, CBX5, NDC80 and ZWINT.

It is found in the chromosome. It localises to the centromere. Its subcellular location is the kinetochore. Functionally, part of the MIS12 complex which is required for normal chromosome alignment and segregation and for kinetochore formation during mitosis. Essential for proper kinetochore microtubule attachments. The protein is Protein MIS12 homolog of Mus musculus (Mouse).